Consider the following 230-residue polypeptide: uncharacterized protein (230 aa).

Positions 1 to 21 (MARYDARLRGIGKAHACSAFA) are cleaved as a signal peptide. Positions 47 to 190 (SASVQENFIA…TVQTSSSGDP (144 aa)) are disordered. Over residues 141 to 150 (PQSQTSANSQ) the composition is skewed to polar residues. The segment covering 151–165 (KKPEIRCRERSKNAR) has biased composition (basic and acidic residues). The span at 173 to 188 (AVATNEAETVQTSSSG) shows a compositional bias: polar residues.

The protein to R.meliloti RA0936 and y4aO.

This is an uncharacterized protein from Sinorhizobium fredii (strain NBRC 101917 / NGR234).